The chain runs to 394 residues: MAARRRPAAGVGARDALAVLALALCTPGVGGGALEWYSAMVSIEYVDPQSNLTVWSVSESGRFGESSLREERQGLVGVPRAPAPAEGCAPDTRFVAPGALGNAPWVALVARGGCTFKDKVLAAARRNASAVVVYNLESNGNATEPMSHAGTGNIVVIMISYPKGREIFDLVQKGIPVKMRIEIGTRHMQEFISGQSVVFVAIAFITMMIISLAWLIFYYIQRFLYTGSQFGSQNHRKETKKVIGQLPLHTVKHGEKGIDVDAENCAVCIENFKVKDVIRILPCKHIFHRICIDPWLLDHRTCPMCKLDVIKALGYWGDPEDTQELPTPEAAPGRVSVGNLSVTSQDEERSESNLPSSSSSESGPHRPCLKEDAGEDTALLGAGRSEPQHGGSIC.

Positions 1-31 (MAARRRPAAGVGARDALAVLALALCTPGVGG) are cleaved as a signal peptide. 2 N-linked (GlcNAc...) asparagine glycosylation sites follow: Asn51 and Asn141. One can recognise a PA domain in the interval 66-171 (SSLREERQGL…PKGREIFDLV (106 aa)). A helical transmembrane segment spans residues 197–217 (VVFVAIAFITMMIISLAWLIF). The RING-type; atypical zinc-finger motif lies at 265 to 306 (CAVCIENFKVKDVIRILPCKHIFHRICIDPWLLDHRTCPMCK). Residues 321-394 (DTQELPTPEA…SEPQHGGSIC (74 aa)) are disordered. Residue Thr327 is modified to Phosphothreonine. Asn339 carries N-linked (GlcNAc...) asparagine glycosylation. Ser341 and Ser344 each carry phosphoserine. Residues 352–362 (SNLPSSSSSES) are compositionally biased toward low complexity.

It localises to the membrane. The enzyme catalyses S-ubiquitinyl-[E2 ubiquitin-conjugating enzyme]-L-cysteine + [acceptor protein]-L-lysine = [E2 ubiquitin-conjugating enzyme]-L-cysteine + N(6)-ubiquitinyl-[acceptor protein]-L-lysine.. It participates in protein modification; protein ubiquitination. E3 ubiquitin-protein ligase. Ubiquitinates BRAF, inducing its proteasomal degradation. This Mus musculus (Mouse) protein is E3 ubiquitin-protein ligase RNF149 (Rnf149).